We begin with the raw amino-acid sequence, 251 residues long: UPF0246 protein PEPE_1842 (251 aa).

It belongs to the UPF0246 family.

This Pediococcus pentosaceus (strain ATCC 25745 / CCUG 21536 / LMG 10740 / 183-1w) protein is UPF0246 protein PEPE_1842.